The sequence spans 72 residues: ATP synthase subunit c (72 aa).

A run of 2 helical transmembrane segments spans residues 4–24 (ALGAGLAVSIAGIGGGIGMGI) and 46–66 (LLFITLAFIETLTIYGLLIAF).

Belongs to the ATPase C chain family. F-type ATPases have 2 components, F(1) - the catalytic core - and F(0) - the membrane proton channel. F(1) has five subunits: alpha(3), beta(3), gamma(1), delta(1), epsilon(1). F(0) has three main subunits: a(1), b(2) and c(10-14). The alpha and beta chains form an alternating ring which encloses part of the gamma chain. F(1) is attached to F(0) by a central stalk formed by the gamma and epsilon chains, while a peripheral stalk is formed by the delta and b chains.

The protein localises to the cell membrane. Its function is as follows. F(1)F(0) ATP synthase produces ATP from ADP in the presence of a proton or sodium gradient. F-type ATPases consist of two structural domains, F(1) containing the extramembraneous catalytic core and F(0) containing the membrane proton channel, linked together by a central stalk and a peripheral stalk. During catalysis, ATP synthesis in the catalytic domain of F(1) is coupled via a rotary mechanism of the central stalk subunits to proton translocation. Key component of the F(0) channel; it plays a direct role in translocation across the membrane. A homomeric c-ring of between 10-14 subunits forms the central stalk rotor element with the F(1) delta and epsilon subunits. The polypeptide is ATP synthase subunit c (Syntrophomonas wolfei subsp. wolfei (strain DSM 2245B / Goettingen)).